The sequence spans 728 residues: Nucleolar GTP-binding protein 2 (728 aa).

N-acetylmethionine is present on M1. The disordered stretch occupies residues 1–33 (MVKPKYKGRSTINRSAASTNPDRVQGAGGQNMR). Polar residues predominate over residues 10–22 (STINRSAASTNPD). Residues 207–368 (WGELYKVIDS…LIDCPGVVYP (162 aa)) form the CP-type G domain. GTP is bound by residues 317 to 324 (GYPNVGKS) and 361 to 365 (DCPGV). 3 disordered regions span residues 462–521 (PPNA…RNSE), 538–595 (VGPQ…DTKA), and 636–728 (YKEE…RQKQ). Low complexity predominate over residues 480 to 489 (EVPTETTQNN). Residues 498-520 (EVERSDSITEKEPEGDCSQDRNS) show a composition bias toward basic and acidic residues. Residue S504 is modified to Phosphoserine. The segment covering 553 to 586 (SDLEDLESSGEEEEQEQEQPGEDAEEERSPDTQE) has biased composition (acidic residues). Basic residues predominate over residues 718–728 (KHRRNKFRQKQ).

The protein belongs to the TRAFAC class YlqF/YawG GTPase family. NOG2 subfamily. As to quaternary structure, interacts with LYAR and RPL23A. Interacts with the nuclear importin-beta receptor and, at a lower extent, with importin-alpha.

The protein resides in the nucleus. It localises to the nucleolus. Functionally, GTPase that associates with pre-60S ribosomal subunits in the nucleolus and is required for their nuclear export and maturation. May promote cell proliferation possibly by increasing p53/TP53 protein levels, and consequently those of its downstream product CDKN1A/p21, and decreasing RPL23A protein levels. The protein is Nucleolar GTP-binding protein 2 (Gnl2) of Mus musculus (Mouse).